The chain runs to 284 residues: NAD kinase (284 aa).

The active-site Proton acceptor is the aspartate 67. NAD(+) contacts are provided by residues 67–68, 141–142, arginine 152, lysine 169, aspartate 171, 182–187, and glutamine 241; these read DG, ND, and TGYSLS.

This sequence belongs to the NAD kinase family. It depends on a divalent metal cation as a cofactor.

It localises to the cytoplasm. It carries out the reaction NAD(+) + ATP = ADP + NADP(+) + H(+). Its function is as follows. Involved in the regulation of the intracellular balance of NAD and NADP, and is a key enzyme in the biosynthesis of NADP. Catalyzes specifically the phosphorylation on 2'-hydroxyl of the adenosine moiety of NAD to yield NADP. The polypeptide is NAD kinase (Geotalea daltonii (strain DSM 22248 / JCM 15807 / FRC-32) (Geobacter daltonii)).